A 439-amino-acid polypeptide reads, in one-letter code: Telomeric repeat-binding factor 1 (439 aa).

Positions 1-36 are disordered; it reads MAEDVSSAAPSPRGCADGRDADPTEEQMAETERNDE. Position 2 is an N-acetylalanine (Ala-2). Ser-11 is modified (phosphoserine). Residues 23–36 are compositionally biased toward acidic residues; that stretch reads PTEEQMAETERNDE. Residues 58–268 form a TRFH mediates dimerization region; the sequence is EEEEEDAGLV…AAAKVVESKR (211 aa). Residue Lys-213 forms a Glycyl lysine isopeptide (Lys-Gly) (interchain with G-Cter in SUMO2) linkage. Phosphoserine; by ATM is present on Ser-219. Residues 265 to 378 are interaction with RLIM; that stretch reads ESKRTRTITS…PVTPEKHRAR (114 aa). The segment at 266-311 is disordered; it reads SKRTRTITSQDKPSGNDVEMETEANLDTRKSVSDKQSAVTESSEGT. A compositionally biased stretch (polar residues) spans 299–311; sequence DKQSAVTESSEGT. Residue Lys-325 forms a Glycyl lysine isopeptide (Lys-Gly) (interchain with G-Cter in SUMO2) linkage. The tract at residues 326–375 is disordered; that stretch reads LQHGTQQQDLNKKERRVGTPQSTKKKKESRRATESRIPVSKSQPVTPEKH. The Nuclear localization signal motif lies at 337-356; sequence KKERRVGTPQSTKKKKESRR. Lys-366 participates in a covalent cross-link: Glycyl lysine isopeptide (Lys-Gly) (interchain with G-Cter in SUMO2). In terms of domain architecture, HTH myb-type spans 375–432; sequence HRARKRQAWLWEEDKNLRSGVRKYGEGNWSKILLHYKFNNRTSVMLKDRWRTMKKLKL. The H-T-H motif DNA-binding region spans 403–428; the sequence is WSKILLHYKFNNRTSVMLKDRWRTMK.

As to quaternary structure, homodimer; can contain both isoforms. Found in a complex with POT1; TINF2 and TNKS1. Interacts with ATM, TINF2, TNKS1, TNKS2, PINX1, NEK2 and MAPRE1. Component of the shelterin complex (telosome) composed of TERF1, TERF2, TINF2, TERF2IP ACD and POT1. Interacts with RLIM (via N-terminus). Interacts with FBXO4. Interaction with TINF2 protects against interaction with FBXO4 and subsequent polyubiquitination and proteasomal degradation. Interacts with GNL3L; this interaction promotes homodimerization. Interacts with TIN2. Interacts with RTEL1. Interactions with GNL3L and TIN2 are mutually exclusive. Interacts with CCDC79/TERB1. Interacts with TRIOBP isoform 1; mediates TERF1 localization to the centrosome. Phosphorylated preferentially on Ser-219 in an ATM-dependent manner in response to ionizing DNA damage. Post-translationally, ADP-ribosylation by TNKS1 or TNKS2 diminishes its ability to bind to telomeric DNA. In terms of processing, ubiquitinated by RLIM/RNF12, leading to its degradation by the proteasome. Ubiquitinated by a SCF (SKP1-CUL1-F-box protein) ubiquitin-protein ligase complex, leading to its degradation by the proteasome. Highly expressed and ubiquitous. Isoform Pin2 predominates.

It is found in the nucleus. The protein localises to the cytoplasm. It localises to the cytoskeleton. The protein resides in the spindle. Its subcellular location is the chromosome. It is found in the telomere. In terms of biological role, binds the telomeric double-stranded 5'-TTAGGG-3' repeat and negatively regulates telomere length. Involved in the regulation of the mitotic spindle. Component of the shelterin complex (telosome) that is involved in the regulation of telomere length and protection. Shelterin associates with arrays of double-stranded 5'-TTAGGG-3' repeats added by telomerase and protects chromosome ends; without its protective activity, telomeres are no longer hidden from the DNA damage surveillance and chromosome ends are inappropriately processed by DNA repair pathways. The chain is Telomeric repeat-binding factor 1 (TERF1) from Homo sapiens (Human).